The following is a 387-amino-acid chain: Formate-dependent phosphoribosylglycinamide formyltransferase (387 aa).

N(1)-(5-phospho-beta-D-ribosyl)glycinamide is bound by residues 15 to 16 (EL) and E75. ATP contacts are provided by residues R106, K147, 152–157 (SSGKGQ), 187–190 (EEFI), and E195. The ATP-grasp domain maps to 111 to 301 (DLASNELNIR…EFELHLRAVL (191 aa)). Mg(2+)-binding residues include E260 and E272. N(1)-(5-phospho-beta-D-ribosyl)glycinamide contacts are provided by residues D279, K349, and 356 to 357 (RR).

This sequence belongs to the PurK/PurT family. As to quaternary structure, homodimer.

It catalyses the reaction N(1)-(5-phospho-beta-D-ribosyl)glycinamide + formate + ATP = N(2)-formyl-N(1)-(5-phospho-beta-D-ribosyl)glycinamide + ADP + phosphate + H(+). It participates in purine metabolism; IMP biosynthesis via de novo pathway; N(2)-formyl-N(1)-(5-phospho-D-ribosyl)glycinamide from N(1)-(5-phospho-D-ribosyl)glycinamide (formate route): step 1/1. In terms of biological role, involved in the de novo purine biosynthesis. Catalyzes the transfer of formate to 5-phospho-ribosyl-glycinamide (GAR), producing 5-phospho-ribosyl-N-formylglycinamide (FGAR). Formate is provided by PurU via hydrolysis of 10-formyl-tetrahydrofolate. This chain is Formate-dependent phosphoribosylglycinamide formyltransferase, found in Prochlorococcus marinus (strain NATL2A).